The following is a 602-amino-acid chain: Aspartate--tRNA(Asp/Asn) ligase (602 aa).

Glutamate 176 contacts L-aspartate. Residues 200 to 203 (QQFK) are aspartate. Residues arginine 222 and histidine 452 each coordinate L-aspartate. 222–224 (RDE) is a binding site for ATP. Glutamate 490 contributes to the ATP binding site. Arginine 497 contacts L-aspartate. 542–545 (GIDR) contributes to the ATP binding site.

It belongs to the class-II aminoacyl-tRNA synthetase family. Type 1 subfamily. Homodimer.

It localises to the cytoplasm. It carries out the reaction tRNA(Asx) + L-aspartate + ATP = L-aspartyl-tRNA(Asx) + AMP + diphosphate. Functionally, aspartyl-tRNA synthetase with relaxed tRNA specificity since it is able to aspartylate not only its cognate tRNA(Asp) but also tRNA(Asn). Reaction proceeds in two steps: L-aspartate is first activated by ATP to form Asp-AMP and then transferred to the acceptor end of tRNA(Asp/Asn). The protein is Aspartate--tRNA(Asp/Asn) ligase of Rickettsia conorii (strain ATCC VR-613 / Malish 7).